A 323-amino-acid chain; its full sequence is tRNA(Ile)-lysidine synthase (323 aa).

ATP is bound at residue serine 33–serine 38.

It belongs to the tRNA(Ile)-lysidine synthase family.

Its subcellular location is the cytoplasm. It carries out the reaction cytidine(34) in tRNA(Ile2) + L-lysine + ATP = lysidine(34) in tRNA(Ile2) + AMP + diphosphate + H(+). Ligates lysine onto the cytidine present at position 34 of the AUA codon-specific tRNA(Ile) that contains the anticodon CAU, in an ATP-dependent manner. Cytidine is converted to lysidine, thus changing the amino acid specificity of the tRNA from methionine to isoleucine. The sequence is that of tRNA(Ile)-lysidine synthase from Mycobacterium bovis (strain ATCC BAA-935 / AF2122/97).